A 503-amino-acid polypeptide reads, in one-letter code: ATP synthase subunit alpha (503 aa).

ATP is bound at residue 169–176 (GDRKTGKT).

This sequence belongs to the ATPase alpha/beta chains family. In terms of assembly, F-type ATPases have 2 components, CF(1) - the catalytic core - and CF(0) - the membrane proton channel. CF(1) has five subunits: alpha(3), beta(3), gamma(1), delta(1), epsilon(1). CF(0) has three main subunits: a(1), b(2) and c(9-12). The alpha and beta chains form an alternating ring which encloses part of the gamma chain. CF(1) is attached to CF(0) by a central stalk formed by the gamma and epsilon chains, while a peripheral stalk is formed by the delta and b chains.

The protein resides in the cell membrane. The catalysed reaction is ATP + H2O + 4 H(+)(in) = ADP + phosphate + 5 H(+)(out). Increases 2-fold following exposure to low pH. Produces ATP from ADP in the presence of a proton gradient across the membrane. The alpha chain is a regulatory subunit. This Lactobacillus acidophilus (strain ATCC 700396 / NCK56 / N2 / NCFM) protein is ATP synthase subunit alpha.